The chain runs to 802 residues: Phenylalanine--tRNA ligase beta subunit (802 aa).

A tRNA-binding domain is found at 38–148; the sequence is SKNFERVIVG…SEVPVGTDIS (111 aa). The B5 domain maps to 403-478; sequence VIQKKIFVLK…RVFGYHNIPA (76 aa). Mg(2+)-binding residues include Asp456, Asp462, and Asp466. The FDX-ACB domain occupies 703 to 796; it reads SLYPRCSRDI…LQEKFNAILR (94 aa).

The protein belongs to the phenylalanyl-tRNA synthetase beta subunit family. Type 1 subfamily. Tetramer of two alpha and two beta subunits. Mg(2+) serves as cofactor.

The protein resides in the cytoplasm. The catalysed reaction is tRNA(Phe) + L-phenylalanine + ATP = L-phenylalanyl-tRNA(Phe) + AMP + diphosphate + H(+). This chain is Phenylalanine--tRNA ligase beta subunit, found in Buchnera aphidicola subsp. Baizongia pistaciae (strain Bp).